The following is an 87-amino-acid chain: U-actitoxin-Avd3o (87 aa).

A signal peptide spans 1–16 (MVYLLCFFLVADVSYG). In terms of domain architecture, BPTI/Kunitz inhibitor spans 21-71 (CLLPKVVGFCRARFPRYYYNSSSRRCEKFNYGGCGGNANNFSSYYECHIKC). Cystine bridges form between Cys21–Cys71, Cys30–Cys54, and Cys46–Cys67.

Belongs to the venom Kunitz-type family. Sea anemone type 2 potassium channel toxin subfamily.

The protein localises to the secreted. It is found in the nematocyst. Its function is as follows. Serine protease inhibitor that inhibits both tissue and plasma kallikreins. Has hemolytic activity. Inhibits voltage-gated potassium channels (Kv). In Anemonia viridis (Snakelocks anemone), this protein is U-actitoxin-Avd3o.